We begin with the raw amino-acid sequence, 184 residues long: Photosystem I assembly protein Ycf4 (184 aa).

Transmembrane regions (helical) follow at residues 21 to 43 and 58 to 80; these read NFCW…TSSY and IFFP…SSYL.

Belongs to the Ycf4 family.

It localises to the plastid. Its subcellular location is the chloroplast thylakoid membrane. In terms of biological role, seems to be required for the assembly of the photosystem I complex. This Calycanthus floridus var. glaucus (Eastern sweetshrub) protein is Photosystem I assembly protein Ycf4.